Here is a 125-residue protein sequence, read N- to C-terminus: Large ribosomal subunit protein eL31 (125 aa).

The protein belongs to the eukaryotic ribosomal protein eL31 family. As to quaternary structure, component of the large ribosomal subunit.

The protein localises to the cytoplasm. In terms of biological role, component of the large ribosomal subunit. The ribosome is a large ribonucleoprotein complex responsible for the synthesis of proteins in the cell. In Xenopus laevis (African clawed frog), this protein is Large ribosomal subunit protein eL31 (rpl31).